A 409-amino-acid polypeptide reads, in one-letter code: DEP domain-containing mTOR-interacting protein (409 aa).

Met1 is subject to N-acetylmethionine. The tract at residues 1–25 (MEEGGSTGSAGSDSSTSGSGGAQQR) is disordered. DEP domains lie at 36–119 (TGEQ…RFRK) and 145–219 (SPEN…QFRM). The DDEX motif signature appears at 217–235 (FRMNFRRRRRLMELLNEKS). Phosphoserine; by MAPK3 is present on Ser235. Residue Thr241 is modified to Phosphothreonine. Residues Ser244 and Ser258 each carry the phosphoserine modification. Thr259 bears the Phosphothreonine mark. Ser263, Ser265, Ser280, Ser282, and Ser283 each carry phosphoserine. Phosphoserine; by CK1 is present on residues Ser286 and Ser287. Positions 286–291 (SSGYFS) match the BetaTrCP degron motif motif. Tyr289 bears the Phosphotyrosine; by SYK mark. Ser291 is modified (phosphoserine; by CK1). Residue Ser293 is modified to Phosphoserine; by MTOR. The residue at position 295 (Thr295) is a Phosphothreonine; by MTOR. Residues Ser297 and Ser298 each carry the phosphoserine modification. Ser299 carries the post-translational modification Phosphoserine; by MTOR. One can recognise a PDZ domain in the interval 330–407 (TFTIVGDAVG…TIVMEVMEEL (78 aa)).

As to quaternary structure, associated component of the mechanistic target of rapamycin complex 1 (mTORC1) which contains MTOR, MLST8 and RPTOR. Associated component of the mechanistic target of rapamycin complex 2 (mTORC2) which contains MTOR, MLST8, PROTOR1, RICTOR, MAPKAP1 and DEPTOR. Interacts (via PDZ domain) with MTOR; interacts with MTOR within both mTORC1 and mTORC2. Interacts (via PDZ domain) with MINAR1 (via N-terminus). Interacts with SIK3. In terms of processing, phosphorylation weakens interaction with MTOR within mTORC1 and mTORC2. Phosphorylated at Ser-286, Ser-287 and Ser-291 in response to mitogenic stimulation by MTOR: DEPTOR is either directly phosphorylated by MTOR or indirectly via proteins kinases that are activated by MTOR, such as CK1/CSNK1A1. Phosphorylation at Ser-286, Ser-287 and Ser-291 promotes ubiquitination by the SCF(BTRC) complex, followed by degradation. Phosphorylation at Ser-235 by MAPK3/ERK1 promotes deubiquitination by USP7, enhancing its stability. Phosphorylation at Tyr-289 by SYK impairs its interaction with MTOR, promoting mTORC1 and mTORC2 signaling. Post-translationally, ubiquitinated; leading to proteasomal degradation. Ubiquitination by the SCF(BTRC) and SCF(FBXW11) complexes following phosphorylation at Ser-286, Ser-287 and Ser-291 by MTOR, leads to its degradation by the proteasome. Deubiquitinated by OTUB1 in response to amino acid via a non-canonical mechanism, leading to DEPTOR stability. Deubiquitinated by USP7 following phosphorylation at Ser-235, promoting its stability.

It localises to the lysosome membrane. With respect to regulation, inhibited upon phosphatidic acid-binding: phosphatidic acid produced upon mitogenic stimulation promotes DEPTOR dissociatiom from the mTORC1 and mTORC2 complexes, leading to their activation. Specifically binds unsaturated phosphatidic acid, such as 16:0-18:1, 18:0-18:1 and di-18:1. Inhibited when nutrients are present via a feedback loop: phosphorylation by MTOR promotes DEPTOR ubiquitination and degradation. Negative regulator of the mTORC1 and mTORC2 complexes: inhibits the protein kinase activity of MTOR, thereby inactivating both complexes. DEPTOR inhibits mTORC1 and mTORC2 to induce autophagy. In contrast to AKT1S1/PRAS40, only partially inhibits mTORC1 activity. This chain is DEP domain-containing mTOR-interacting protein, found in Homo sapiens (Human).